The sequence spans 808 residues: Na(+)/H(+) antiporter 2 (808 aa).

A run of 9 helical transmembrane segments spans residues 12-32 (HVAYSCVGIFSSIFSLVSLFV), 36-56 (LYIGESMVASIFGLIVGPHCL), 70-90 (ITLEISRILLCLQVFAVSVEL), 105-125 (LLVPVMTSGWLVIALFVWILV), 128-148 (LNFPASLLMGACITATDPVLA), 174-194 (CNDGLAIPFVFLSLDLLLYPG), 203-223 (WICVTILWECIFGSILGCIIG), 244-264 (FLAFYLILALTCAGFGSMLGV), and 267-287 (LLVSFFAGTAFAWDGWFAAKT). The N-linked (GlcNAc...) asparagine glycan is linked to Asn-291. Helical transmembrane passes span 294–314 (NVIDVLLNYAYFVYLGSILPW), 319–339 (NPDIGLDVWRLILLSLVVIFL), 361–381 (AMFIGHFGPIGVGAVFAAITS), 409–429 (VMACIWPITCFSIMTSVIVHG), and 432–452 (VAVIMLGRYLSTVTLMALPTG). Disordered regions lie at residues 478 to 499 (QRLDKEPSLSPGQIGGRTSGMV) and 541 to 562 (HASTNDSHGTTTANLGTSNGRA). Residues 542-561 (ASTNDSHGTTTANLGTSNGR) show a composition bias toward polar residues. Asn-545 and Asn-602 each carry an N-linked (GlcNAc...) asparagine glycan. The segment at 774-808 (LHSEDEMADDEAESENDMDYEDSDGPASRFKDHAD) is disordered. A compositionally biased stretch (acidic residues) spans 779–797 (EMADDEAESENDMDYEDSD).

This sequence belongs to the fungal Na(+)/H(+) exchanger family.

It is found in the membrane. In terms of biological role, sodium export from cell, takes up external protons in exchange for internal sodium ions. Seems to be poorly expressed. In Zygosaccharomyces rouxii, this protein is Na(+)/H(+) antiporter 2 (SOD22).